A 419-amino-acid chain; its full sequence is Subtilisin-like protease 2 (419 aa).

The N-terminal stretch at 1–16 (MQLLNFGLLLLPFVAG) is a signal peptide. The propeptide occupies 17-122 (DLAPQPEPLL…VHPDQHVYLA (106 aa)). An Inhibitor I9 domain is found at 36–122 (QYIVTLKEGL…VHPDQHVYLA (87 aa)). One can recognise a Peptidase S8 domain in the interval 131 to 419 (RWGLGYMSSK…IQERKFKLPK (289 aa)). Catalysis depends on charge relay system residues Asp169 and His201. 3 N-linked (GlcNAc...) asparagine glycosylation sites follow: Asn248, Asn261, and Asn348. Ser357 acts as the Charge relay system in catalysis. N-linked (GlcNAc...) asparagine glycosylation occurs at Asn388.

The protein belongs to the peptidase S8 family.

It localises to the secreted. Secreted subtilisin-like serine protease with keratinolytic activity that contributes to pathogenicity. The protein is Subtilisin-like protease 2 (SUB2) of Trichophyton verrucosum (Cattle ringworm fungus).